The primary structure comprises 428 residues: C4-dicarboxylate transport protein (428 aa).

9 consecutive transmembrane segments (helical) span residues 7 to 27 (SLYF…IVAP), 40 to 60 (FIKL…VLGI), 75 to 95 (LALL…LLIV), 143 to 163 (AFAR…GIAL), 196 to 216 (PIGA…GSLF), 221 to 241 (LMAT…GAIA), 306 to 326 (IYLT…MTLG), 329 to 349 (FTLL…TGSG), and 351 to 371 (IVLA…LALI).

This sequence belongs to the dicarboxylate/amino acid:cation symporter (DAACS) (TC 2.A.23) family.

It is found in the cell inner membrane. Its function is as follows. Responsible for the transport of dicarboxylates such as succinate, fumarate, and malate from the periplasm across the membrane. This chain is C4-dicarboxylate transport protein, found in Solibacter usitatus (strain Ellin6076).